Here is a 415-residue protein sequence, read N- to C-terminus: Thylakoid ADP,ATP carrier protein, chloroplastic (415 aa).

Residues 1–61 constitute a chloroplast transit peptide; the sequence is MGEEKSLLQF…NFASLSVAIR (61 aa). 5 helical membrane passes run 106 to 126, 182 to 207, 219 to 239, 273 to 293, and 309 to 329; these read IALL…AFAG, LPQV…KLFR, LGAG…LDVL, GPSL…FDLV, and LLTA…LDTI. 3 Solcar repeats span residues 113 to 205, 213 to 296, and 307 to 387; these read PKDA…YKKL, LSVL…VKKS, and SSLL…VKKL. An ADP-binding site is contributed by Arg187. Arg330 serves as a coordination point for ADP. The helical transmembrane segment at 362–388 threads the bilayer; it reads GFVPNALKSMPNSSIKLTTFDIVKKLI.

Belongs to the mitochondrial carrier (TC 2.A.29) family. As to expression, highly expressed in developing photosynthetic organs such as leaves, flower buds and green siliques. Also detected in roots, flowers, mature leaves and stems.

Its subcellular location is the plastid. The protein resides in the chloroplast thylakoid membrane. It localises to the chloroplast envelope. Its activity is regulated as follows. KM and Vmax values toward ATP only are increased by m-chlorocarbonyl cyanide phenylhydrazone (CCCP). The corresponding values for ADP are not affected. Specifically transports adenine nucleotides. Involved in the uptake of ATP into thylakoids in exchange for lumenal ADP. The sequence is that of Thylakoid ADP,ATP carrier protein, chloroplastic (TAAC) from Arabidopsis thaliana (Mouse-ear cress).